We begin with the raw amino-acid sequence, 579 residues long: Pre-mRNA-processing factor 17 (579 aa).

Residues Met-1–Glu-19 are compositionally biased toward low complexity. 2 disordered regions span residues Met-1–Ala-34 and Asp-204–Glu-237. WD repeat units lie at residues Gly-286–Arg-326, Gly-330–Arg-369, Thr-371–Glu-413, Arg-416–Tyr-455, Pro-459–Lys-498, Gly-504–Arg-545, and Ala-548–Trp-578.

Component of the catalytic spliceosome C complexes. Component of the postcatalytic spliceosome P complex. Interacts with PPIL1; this interaction leads to CDC40 isomerization. Post-translationally, undergoes isomerization of the peptide bond between Gly-94 and Pro-95. The reaction is catalyzed by PPIL1.

Its subcellular location is the nucleus. The protein resides in the nucleus speckle. Its function is as follows. Required for pre-mRNA splicing as component of the activated spliceosome. Plays an important role in embryonic brain development; this function does not require proline peptide bond isomerization. The chain is Pre-mRNA-processing factor 17 (Cdc40) from Mus musculus (Mouse).